The primary structure comprises 242 residues: Venom nerve growth factor 1 (242 aa).

The N-terminal stretch at 1 to 18 is a signal peptide; that stretch reads MSMLCYTLIIAFLIGIWA. A propeptide spanning residues 19–125 is cleaved from the precursor; the sequence is APQSEDNVPL…ALNRNIQAKR (107 aa). Intrachain disulfides connect cysteine 139–cysteine 203, cysteine 181–cysteine 231, and cysteine 191–cysteine 233.

The protein belongs to the NGF-beta family. As to quaternary structure, homodimer; non-covalently linked. Expressed by the venom gland.

Its subcellular location is the secreted. Nerve growth factor is important for the development and maintenance of the sympathetic and sensory nervous systems. It stimulates division and differentiation of sympathetic and embryonic sensory neurons as well as basal forebrain cholinergic neurons in the brain. Its relevance in the snake venom is not clear. However, it has been shown to inhibit metalloproteinase-dependent proteolysis of platelet glycoprotein Ib alpha, suggesting a metalloproteinase inhibition to prevent metalloprotease autodigestion and/or protection against prey proteases. Binds a lipid between the two protein chains in the homodimer. The lipid-bound form promotes histamine relase from mouse mast cells, contrary to the lipid-free form. This Pseudechis australis (Mulga snake) protein is Venom nerve growth factor 1.